We begin with the raw amino-acid sequence, 335 residues long: Nucleoid-associated protein YejK (335 aa).

This sequence belongs to the YejK family.

It localises to the cytoplasm. It is found in the nucleoid. The sequence is that of Nucleoid-associated protein YejK from Escherichia coli (strain K12 / MC4100 / BW2952).